A 271-amino-acid polypeptide reads, in one-letter code: Colicin-M (271 aa).

The short motif at 2-9 (ETLTVHAP) is the TonB box element.

Its function is as follows. Colicins are polypeptide toxins produced by and active against E.coli and closely related bacteria. Functionally, this is a calcium-requiring inhibitor for murein biosynthesis; it causes lysis of sensitive cells accompanied by murein degradation. The target site is possibly the cytoplasmic membrane. In Escherichia coli, this protein is Colicin-M (cma).